The primary structure comprises 461 residues: Fumarate hydratase class II (461 aa).

Residues 97–99 (SGT), 127–130 (HPND), 137–139 (SSN), and threonine 185 each bind substrate. Catalysis depends on histidine 186, which acts as the Proton donor/acceptor. Serine 316 is an active-site residue. Substrate-binding positions include serine 317 and 322–324 (KVN).

This sequence belongs to the class-II fumarase/aspartase family. Fumarase subfamily. In terms of assembly, homotetramer.

It is found in the cytoplasm. The catalysed reaction is (S)-malate = fumarate + H2O. It participates in carbohydrate metabolism; tricarboxylic acid cycle; (S)-malate from fumarate: step 1/1. Functionally, involved in the TCA cycle. Catalyzes the stereospecific interconversion of fumarate to L-malate. The chain is Fumarate hydratase class II from Staphylococcus aureus (strain MSSA476).